A 387-amino-acid polypeptide reads, in one-letter code: Paralemmin-1 (387 aa).

Methionine 1 is subject to N-acetylmethionine. Positions 9-101 (TSQQERLQAI…EKEIEVLERG (93 aa)) form a coiled coil. 2 stretches are compositionally biased toward basic and acidic residues: residues 31–41 (KRRQLEDERRQ) and 69–102 (DLRR…ERGD). The segment at 31 to 160 (KRRQLEDERR…VSNTPLRTVD (130 aa)) is disordered. Over residues 104–117 (APATAKENAAAPSP) the composition is skewed to low complexity. Serine 116 and serine 124 each carry phosphoserine. Residues threonine 141 and threonine 145 each carry the phosphothreonine modification. Position 162 is a phosphoserine (serine 162). At threonine 243 the chain carries Phosphothreonine. Serine 245 is subject to Phosphoserine. 2 disordered regions span residues 247–296 (AGST…GQEP) and 335–378 (AEPK…DMKK). Positions 286 to 296 (GPPGIQPGQEP) are enriched in low complexity. Phosphoserine is present on serine 346. Threonine 367 is subject to Phosphothreonine. At serine 369 the chain carries Phosphoserine. S-palmitoyl cysteine attachment occurs at residues cysteine 381 and cysteine 383. Residue cysteine 384 is modified to Cysteine methyl ester. Residue cysteine 384 is the site of S-farnesyl cysteine attachment. The propeptide at 385–387 (SIM) is removed in mature form.

The protein belongs to the paralemmin family. As to quaternary structure, interacts with dopamine receptor DRD3. In terms of tissue distribution, widely expressed with highest expression in brain and testis and intermediate expression in heart and adrenal gland.

It is found in the cell membrane. The protein localises to the cell projection. It localises to the filopodium membrane. Its subcellular location is the axon. The protein resides in the dendrite. It is found in the dendritic spine. The protein localises to the basolateral cell membrane. It localises to the apicolateral cell membrane. Functionally, involved in plasma membrane dynamics and cell process formation. Isoform 1 and isoform 2 are necessary for axonal and dendritic filopodia induction, for dendritic spine maturation and synapse formation in a palmitoylation-dependent manner. The protein is Paralemmin-1 (PALM) of Homo sapiens (Human).